The sequence spans 153 residues: T cell receptor delta constant (153 aa).

N14 carries an N-linked (GlcNAc...) asparagine glycan. An intrachain disulfide couples C20 to C71. N77 carries an N-linked (GlcNAc...) asparagine glycan. A compositionally biased stretch (basic and acidic residues) spans 85–102 (FEVKTDSTDHVKPKETEN). Residues 85–112 (FEVKTDSTDHVKPKETENTKQPSKSCHK) are disordered. A helical transmembrane segment spans residues 130–152 (LGLRMLFAKTVAVNFLLTAKLFF).

As to quaternary structure, gamma-delta TR is a heterodimer composed of a gamma and delta chain; disulfide-linked. The gamma-delta TR is associated with the transmembrane signaling CD3 coreceptor proteins following the stoichiometry: a single gamma-delta TR heterodimer associates with one CD3D-CD3E heterodimer, one CD3G-CD3E heterodimer and one CD247 homodimer forming a stable octameric structure. Upon activation, gamma-delta TR complex associates with FCER1G to initiate intracellular signaling.

It localises to the cell membrane. Constant region of T cell receptor (TR) delta chain that participates in the antigen recognition. Gamma-delta TRs recognize a variety of self and foreign non-peptide antigens frequently expressed at the epithelial boundaries between the host and external environment, including endogenous lipids presented by MH-like protein CD1D and phosphoantigens presented by butyrophilin-like molecule BTN3A1. Upon antigen recognition induces rapid, innate-like immune responses involved in pathogen clearance and tissue repair. Binding of gamma-delta TR complex to antigen triggers phosphorylation of immunoreceptor tyrosine-based activation motifs (ITAMs) in the CD3 chains by the LCK and FYN kinases, allowing the recruitment, phosphorylation, and activation of ZAP70 that facilitates phosphorylation of the scaffolding proteins LCP2 and LAT. This lead to the formation of a supramolecular signalosome that recruits the phospholipase PLCG1, resulting in calcium mobilization and ERK activation, ultimately leading to T cell expansion and differentiation into effector cells. Gamma-delta TRs are produced through somatic rearrangement of a limited repertoire of variable (V), diversity (D), and joining (J) genes. The potential diversity of gamma-delta TRs is conferred by the unique ability to rearrange (D) genes in tandem and to utilize all three reading frames. The combinatorial diversity is considerably increased by the sequence exonuclease trimming and random nucleotide (N) region additions which occur during the V-(D)-J rearrangements. This is T cell receptor delta constant from Homo sapiens (Human).